The following is a 280-amino-acid chain: Diaminopimelate epimerase (280 aa).

Substrate-binding residues include Asn-11 and Asn-62. Cys-71 functions as the Proton donor in the catalytic mechanism. Substrate-binding positions include 72 to 73 (GN), Asn-160, Asn-193, and 211 to 212 (ER). The active-site Proton acceptor is Cys-220. Residue 221–222 (GT) coordinates substrate.

The protein belongs to the diaminopimelate epimerase family. Homodimer.

The protein resides in the cytoplasm. It carries out the reaction (2S,6S)-2,6-diaminopimelate = meso-2,6-diaminopimelate. It functions in the pathway amino-acid biosynthesis; L-lysine biosynthesis via DAP pathway; DL-2,6-diaminopimelate from LL-2,6-diaminopimelate: step 1/1. In terms of biological role, catalyzes the stereoinversion of LL-2,6-diaminopimelate (L,L-DAP) to meso-diaminopimelate (meso-DAP), a precursor of L-lysine and an essential component of the bacterial peptidoglycan. The polypeptide is Diaminopimelate epimerase (Acetivibrio thermocellus (strain ATCC 27405 / DSM 1237 / JCM 9322 / NBRC 103400 / NCIMB 10682 / NRRL B-4536 / VPI 7372) (Clostridium thermocellum)).